The chain runs to 232 residues: MLKLTDITWLYQHLPMRFSLTVERGEQVAILGPSGAGKSTLLNLIAGFLTPASGSLTIDGVDHTTTPPSRRPVSMLFQENNLFSHLTVAQNIGLGLNPGLKLNAAQQEKMHAIARQMGIDNLMARLPGELSGGQRQRVALARCLVREQPILLLDEPFSALDPALRQEMLTLVSTSCQQQKMTLLMVSHSVEDAARIATRSVVVADGRIAWQGKTEELLSGKASASAILGITG.

Residues 2-230 enclose the ABC transporter domain; the sequence is LKLTDITWLY…KASASAILGI (229 aa). 32-39 contributes to the ATP binding site; it reads GPSGAGKS.

The protein belongs to the ABC transporter superfamily. Thiamine importer (TC 3.A.1.19.1) family. The complex is composed of two ATP-binding proteins (ThiQ), two transmembrane proteins (ThiP) and a solute-binding protein (ThiB).

The protein resides in the cell inner membrane. The catalysed reaction is thiamine(out) + ATP + H2O = thiamine(in) + ADP + phosphate + H(+). Part of the ABC transporter complex ThiBPQ involved in thiamine import. Responsible for energy coupling to the transport system. In Shigella boydii serotype 4 (strain Sb227), this protein is Thiamine import ATP-binding protein ThiQ.